Consider the following 237-residue polypeptide: Ribosomal RNA small subunit methyltransferase G (237 aa).

Residues Gly-78, Phe-83, 129-130, and Arg-148 each bind S-adenosyl-L-methionine; that span reads AE. The tract at residues 218–237 is disordered; the sequence is KKETPNKYPRKAGMPNKRPL.

The protein belongs to the methyltransferase superfamily. RNA methyltransferase RsmG family.

Its subcellular location is the cytoplasm. Its function is as follows. Specifically methylates the N7 position of a guanine in 16S rRNA. This is Ribosomal RNA small subunit methyltransferase G from Streptococcus pneumoniae serotype 19F (strain G54).